Reading from the N-terminus, the 119-residue chain is Phytosulfokines 2 (119 aa).

An N-terminal signal peptide occupies residues 1–34 (MSTTRGVSSSSAAAALALLLLFALCFFSFHSAAA). Positions 35–109 (ARAVPRDEHQ…RRLLSDAHLD (75 aa)) are excised as a propeptide. A sulfotyrosine mark is found at tyrosine 110 and tyrosine 112. Residues 115–119 (HKNKP) constitute a propeptide that is removed on maturation.

The protein belongs to the phytosulfokine family. Post-translationally, sulfation is important for activity and for the binding to a putative membrane receptor. PSK-alpha is produced by endopeptidase digestion. PSK-beta is produced from PSK-alpha by exopeptidase digestion.

Its subcellular location is the secreted. In terms of biological role, promotes plant cell differentiation, organogenesis and somatic embryogenesis as well as cell proliferation. The protein is Phytosulfokines 2 (PSK2) of Oryza sativa subsp. indica (Rice).